The chain runs to 252 residues: Hydroxyacylglutathione hydrolase (252 aa).

7 residues coordinate Zn(2+): His-54, His-56, Asp-58, His-59, His-111, Asp-128, and His-166.

This sequence belongs to the metallo-beta-lactamase superfamily. Glyoxalase II family. As to quaternary structure, monomer. The cofactor is Zn(2+).

The enzyme catalyses an S-(2-hydroxyacyl)glutathione + H2O = a 2-hydroxy carboxylate + glutathione + H(+). It functions in the pathway secondary metabolite metabolism; methylglyoxal degradation; (R)-lactate from methylglyoxal: step 2/2. Functionally, thiolesterase that catalyzes the hydrolysis of S-D-lactoyl-glutathione to form glutathione and D-lactic acid. The chain is Hydroxyacylglutathione hydrolase from Photobacterium profundum (strain SS9).